The primary structure comprises 86 residues: Cytochrome c-555 (86 aa).

Heme c contacts are provided by cysteine 14, cysteine 17, histidine 18, and methionine 60.

Binds 1 heme c group covalently per subunit.

Its function is as follows. This basic c-type monoheme cytochrome has been found exclusively in the green photosynthetic bacteria, although its role in bacterial photosynthesis is not established. It has an unusually low redox potential compared with mitochondrial cytochrome c. It is reactive with cytochrome c oxidases but not with reductases. In Chlorobaculum thiosulfatiphilum (Chlorobium limicola f.sp. thiosulfatophilum), this protein is Cytochrome c-555.